The chain runs to 578 residues: Protein LIKE EARLY STARVATION, chloroplastic (578 aa).

Residues 1–56 (MALRLGVSIGAALGSSHWDDGQRVRQRDFSASVNFTAPVTSRRSLRGSRTGVRILR) constitute a chloroplast transit peptide. Disordered regions lie at residues 146 to 166 (NNSG…TSEV) and 187 to 206 (SETS…TPPQ).

The protein belongs to the ESV1 family. In terms of tissue distribution, expressed ubiquitously.

It is found in the plastid. It localises to the chloroplast stroma. Binds preferentially to highly ordered alpha-glucans, such as starch and crystalline maltodextrins. Involved in the organization of the starch granule matrix, thus influencing starch turnover by modulating the accessibility of starch polymers to modifying and degrading enzymes involved in phosphorylation, hydrolyzes and synthesis, including starch synthases (SSI and SSIII), starch phosphorylases (PHS1), isoamylase, beta-amylase, glucan water dikinase (GWD) and phosphoglucan water dikinase (PWD). This is Protein LIKE EARLY STARVATION, chloroplastic from Arabidopsis thaliana (Mouse-ear cress).